A 123-amino-acid polypeptide reads, in one-letter code: MARIAGIDLPRDKRIVIGLTYIYGIGNTTAEKVLAEAGVSEDVRVRDLSPEDEDKVRAAVDKLNLTLEGDLRREVSLNIKGLQEIASYRGIRHRRGLPVRGQHTKNNARTRKGPARAIAGKKK.

The interval 94–123 is disordered; that stretch reads RRGLPVRGQHTKNNARTRKGPARAIAGKKK.

It belongs to the universal ribosomal protein uS13 family. As to quaternary structure, part of the 30S ribosomal subunit. Forms a loose heterodimer with protein S19. Forms two bridges to the 50S subunit in the 70S ribosome.

Its function is as follows. Located at the top of the head of the 30S subunit, it contacts several helices of the 16S rRNA. In the 70S ribosome it contacts the 23S rRNA (bridge B1a) and protein L5 of the 50S subunit (bridge B1b), connecting the 2 subunits; these bridges are implicated in subunit movement. Contacts the tRNAs in the A and P-sites. The chain is Small ribosomal subunit protein uS13 from Oenococcus oeni (strain ATCC BAA-331 / PSU-1).